Reading from the N-terminus, the 181-residue chain is Adenine phosphoribosyltransferase (181 aa).

This sequence belongs to the purine/pyrimidine phosphoribosyltransferase family. In terms of assembly, homodimer.

It is found in the cytoplasm. The catalysed reaction is AMP + diphosphate = 5-phospho-alpha-D-ribose 1-diphosphate + adenine. It participates in purine metabolism; AMP biosynthesis via salvage pathway; AMP from adenine: step 1/1. Catalyzes a salvage reaction resulting in the formation of AMP, that is energically less costly than de novo synthesis. The sequence is that of Adenine phosphoribosyltransferase from Aliivibrio fischeri (strain ATCC 700601 / ES114) (Vibrio fischeri).